A 261-amino-acid polypeptide reads, in one-letter code: Triosephosphate isomerase (261 aa).

Asn-10–Lys-12 serves as a coordination point for substrate. His-100 functions as the Electrophile in the catalytic mechanism. Glu-172 (proton acceptor) is an active-site residue. Substrate is bound by residues Gly-178, Ser-218, and Gly-239–Gly-240.

This sequence belongs to the triosephosphate isomerase family. Homodimer.

It is found in the cytoplasm. The catalysed reaction is D-glyceraldehyde 3-phosphate = dihydroxyacetone phosphate. It functions in the pathway carbohydrate biosynthesis; gluconeogenesis. The protein operates within carbohydrate degradation; glycolysis; D-glyceraldehyde 3-phosphate from glycerone phosphate: step 1/1. In terms of biological role, involved in the gluconeogenesis. Catalyzes stereospecifically the conversion of dihydroxyacetone phosphate (DHAP) to D-glyceraldehyde-3-phosphate (G3P). This Saccharopolyspora erythraea (strain ATCC 11635 / DSM 40517 / JCM 4748 / NBRC 13426 / NCIMB 8594 / NRRL 2338) protein is Triosephosphate isomerase.